The chain runs to 76 residues: Omega-conotoxin-like TxO1 (76 aa).

The first 22 residues, 1 to 22, serve as a signal peptide directing secretion; the sequence is MKLTCVVIVAVLFLTVWTFATA. Residues 23–50 constitute a propeptide that is removed on maturation; sequence DDSGNGLEKLFSNAHHEMKNPEASKLNE. 3 cysteine pairs are disulfide-bonded: C52-C67, C59-C70, and C66-C75.

Belongs to the conotoxin O1 superfamily. In terms of tissue distribution, expressed by the venom duct.

It is found in the secreted. Its function is as follows. Omega-conotoxins act at presynaptic membranes, they bind and block voltage-gated calcium channels (Cav). The protein is Omega-conotoxin-like TxO1 of Conus textile (Cloth-of-gold cone).